Reading from the N-terminus, the 430-residue chain is Shufflon protein A' (430 aa).

The constant region stretch occupies residues 1–361 (MKKYDRGWAS…TGAILSCQSG (361 aa)). The interval 362–430 (TWGTIGGKLK…GCIASCVTLN (69 aa)) is variable region.

The sequence is that of Shufflon protein A' from Escherichia coli.